Consider the following 572-residue polypeptide: Proline--tRNA ligase (572 aa).

Belongs to the class-II aminoacyl-tRNA synthetase family. ProS type 1 subfamily. As to quaternary structure, homodimer.

The protein resides in the cytoplasm. The enzyme catalyses tRNA(Pro) + L-proline + ATP = L-prolyl-tRNA(Pro) + AMP + diphosphate. Its function is as follows. Catalyzes the attachment of proline to tRNA(Pro) in a two-step reaction: proline is first activated by ATP to form Pro-AMP and then transferred to the acceptor end of tRNA(Pro). As ProRS can inadvertently accommodate and process non-cognate amino acids such as alanine and cysteine, to avoid such errors it has two additional distinct editing activities against alanine. One activity is designated as 'pretransfer' editing and involves the tRNA(Pro)-independent hydrolysis of activated Ala-AMP. The other activity is designated 'posttransfer' editing and involves deacylation of mischarged Ala-tRNA(Pro). The misacylated Cys-tRNA(Pro) is not edited by ProRS. This chain is Proline--tRNA ligase, found in Yersinia pestis bv. Antiqua (strain Antiqua).